Here is a 213-residue protein sequence, read N- to C-terminus: Small ribosomal subunit protein uS5 (213 aa).

The interval 1–41 (MSGRERNGGRSAENNDKKERNERNGRNDRGGRNDRRNQQDE) is disordered. The region spanning 45 to 108 (FIERVVTINR…EEARKNFFRV (64 aa)) is the S5 DRBM domain.

It belongs to the universal ribosomal protein uS5 family. In terms of assembly, part of the 30S ribosomal subunit. Contacts proteins S4 and S8.

With S4 and S12 plays an important role in translational accuracy. In terms of biological role, located at the back of the 30S subunit body where it stabilizes the conformation of the head with respect to the body. This chain is Small ribosomal subunit protein uS5, found in Corynebacterium jeikeium (strain K411).